Consider the following 82-residue polypeptide: Small ribosomal subunit protein uS17 (82 aa).

Belongs to the universal ribosomal protein uS17 family. Part of the 30S ribosomal subunit.

One of the primary rRNA binding proteins, it binds specifically to the 5'-end of 16S ribosomal RNA. The chain is Small ribosomal subunit protein uS17 from Bradyrhizobium diazoefficiens (strain JCM 10833 / BCRC 13528 / IAM 13628 / NBRC 14792 / USDA 110).